We begin with the raw amino-acid sequence, 207 residues long: Ribosomal RNA large subunit methyltransferase E (207 aa).

Gly-60, Trp-62, Asp-80, Asp-96, and Asp-121 together coordinate S-adenosyl-L-methionine. Lys-161 (proton acceptor) is an active-site residue.

It belongs to the class I-like SAM-binding methyltransferase superfamily. RNA methyltransferase RlmE family.

The protein resides in the cytoplasm. The catalysed reaction is uridine(2552) in 23S rRNA + S-adenosyl-L-methionine = 2'-O-methyluridine(2552) in 23S rRNA + S-adenosyl-L-homocysteine + H(+). In terms of biological role, specifically methylates the uridine in position 2552 of 23S rRNA at the 2'-O position of the ribose in the fully assembled 50S ribosomal subunit. In Pseudomonas aeruginosa (strain UCBPP-PA14), this protein is Ribosomal RNA large subunit methyltransferase E.